The chain runs to 317 residues: MTISVEKPIFEEVSAFEKSGDNIGELKLDGGFSMPKMDTNDDEAFLAPEMNAFGRQFRDYDVESERQKGVEEFYRLQHINQTVDFVKKMRAEYGKLDKMVMSIWECCELLNEVVDESDPDLDEPQIQHLLQSAEAIRKDYPNEDWLHLTALIHDLGKVITLPQFGGLPQWAVVGDTFPVGCAFDESNVHHKYFVENPDFHNETYNTKNGIYSEGCGLNNVMMSWGHDDYMYLVAKENGSTLPSAGQFIIRYHSFYPLHTAGEYTHLMNEEDKENLKWLHVFNKYDLYSKSKVHVDVEKVKPYYMSLIKKYFPENLRW.

Residues Arg-58 and 115 to 117 (DES) each bind substrate. 3 residues coordinate Fe cation: His-128, His-153, and Asp-154. Substrate-binding positions include Lys-157 and 174-175 (GD). Fe cation contacts are provided by His-226, His-252, and Asp-285. Residue 252–253 (HS) coordinates substrate.

This sequence belongs to the myo-inositol oxygenase family. The cofactor is Fe cation. Expressed in flowers, leaves, siliques, and to a lesser extent in roots.

Its subcellular location is the cytoplasm. The enzyme catalyses myo-inositol + O2 = D-glucuronate + H2O + H(+). The protein operates within polyol metabolism; myo-inositol degradation into D-glucuronate; D-glucuronate from myo-inositol: step 1/1. Catalyzes the oxygenative cleavage of myo-inositol to D-glucuronate. Involved in the biosynthesis of UDP-glucuronic acid (UDP-GlcA), providing nucleotide sugars for cell-wall polymers. May be also involved in plant ascorbate biosynthesis. The protein is Inositol oxygenase 4 (MIOX4) of Arabidopsis thaliana (Mouse-ear cress).